The following is a 99-amino-acid chain: Aspartyl/glutamyl-tRNA(Asn/Gln) amidotransferase subunit C (99 aa).

It belongs to the GatC family. In terms of assembly, heterotrimer of A, B and C subunits.

It carries out the reaction L-glutamyl-tRNA(Gln) + L-glutamine + ATP + H2O = L-glutaminyl-tRNA(Gln) + L-glutamate + ADP + phosphate + H(+). The catalysed reaction is L-aspartyl-tRNA(Asn) + L-glutamine + ATP + H2O = L-asparaginyl-tRNA(Asn) + L-glutamate + ADP + phosphate + 2 H(+). Allows the formation of correctly charged Asn-tRNA(Asn) or Gln-tRNA(Gln) through the transamidation of misacylated Asp-tRNA(Asn) or Glu-tRNA(Gln) in organisms which lack either or both of asparaginyl-tRNA or glutaminyl-tRNA synthetases. The reaction takes place in the presence of glutamine and ATP through an activated phospho-Asp-tRNA(Asn) or phospho-Glu-tRNA(Gln). This is Aspartyl/glutamyl-tRNA(Asn/Gln) amidotransferase subunit C from Polaromonas naphthalenivorans (strain CJ2).